We begin with the raw amino-acid sequence, 209 residues long: MGSSSGSDVEAGFAKLQGEDFEYYMQTYSIILGRNSKKSTVDVDLSSLGGGMNISRHHARIFYDFQRRRFNLEVLGKNGCFVEGVLHLPGNPPIKLDSQDLLQIGDKEFYFLLPVRSILGGGPPIGPKQNVNYPVAAHYGGIGKKGGLFRGREREYYDEEEYDDDDDDDDGTGGKKMRRCDGAEGGGGYGGYGSCGSSGKASISGQLGQ.

In terms of domain architecture, FHA spans 30–87 (IILGRNSKKSTVDVDLSSLGGGMNISRHHARIFYDFQRRRFNLEVLGKNGCFVEGVLH). Over residues 157-171 (YDEEEYDDDDDDDDG) the composition is skewed to acidic residues. The disordered stretch occupies residues 157-209 (YDEEEYDDDDDDDDGTGGKKMRRCDGAEGGGGYGGYGSCGSSGKASISGQLGQ). Gly residues predominate over residues 183-196 (AEGGGGYGGYGSCG). Over residues 200–209 (KASISGQLGQ) the composition is skewed to polar residues.

As to expression, expressed in roots, stems, leaves, young flower buds and open flowers.

Its subcellular location is the nucleus. In terms of biological role, transcription regulator that may be involved in the control of the pre-rRNA processing machinery. Can rescue the phenotypes of slow growth and defective rRNA processing in the yeast fhl1 null mutant. Shows transactivation activity in yeast. The polypeptide is Transcriptional activator FHA1 (Nicotiana tabacum (Common tobacco)).